Consider the following 154-residue polypeptide: Large ribosomal subunit protein uL22 (154 aa).

It belongs to the universal ribosomal protein uL22 family. Part of the 50S ribosomal subunit.

In terms of biological role, this protein binds specifically to 23S rRNA. It makes multiple contacts with different domains of the 23S rRNA in the assembled 50S subunit and ribosome. Functionally, the globular domain of the protein is located near the polypeptide exit tunnel on the outside of the subunit, while an extended beta-hairpin is found that lines the wall of the exit tunnel in the center of the 70S ribosome. The protein is Large ribosomal subunit protein uL22 of Methanoregula boonei (strain DSM 21154 / JCM 14090 / 6A8).